The primary structure comprises 182 residues: MISLALAAETAEHGGEAASHGGLFADPAFWVSIAFLMVVGFVYIKAKNKILGALDGRGAAVKAKLDEARKLRDDAQALLAEYQRRQRDAMKEADEIIRHAKDEAARLRAKAEADLEASIRRREQQAVDRIAQAEAQALAQVRNEAVDVAVSAARSLMAGSLAKADQNRLIDAAIADLPGKLH.

Residues 24–44 (FADPAFWVSIAFLMVVGFVYI) form a helical membrane-spanning segment.

Belongs to the ATPase B chain family. As to quaternary structure, F-type ATPases have 2 components, F(1) - the catalytic core - and F(0) - the membrane proton channel. F(1) has five subunits: alpha(3), beta(3), gamma(1), delta(1), epsilon(1). F(0) has three main subunits: a(1), b(2) and c(10-14). The alpha and beta chains form an alternating ring which encloses part of the gamma chain. F(1) is attached to F(0) by a central stalk formed by the gamma and epsilon chains, while a peripheral stalk is formed by the delta and b chains.

It localises to the cell inner membrane. F(1)F(0) ATP synthase produces ATP from ADP in the presence of a proton or sodium gradient. F-type ATPases consist of two structural domains, F(1) containing the extramembraneous catalytic core and F(0) containing the membrane proton channel, linked together by a central stalk and a peripheral stalk. During catalysis, ATP synthesis in the catalytic domain of F(1) is coupled via a rotary mechanism of the central stalk subunits to proton translocation. Its function is as follows. Component of the F(0) channel, it forms part of the peripheral stalk, linking F(1) to F(0). This chain is ATP synthase subunit b 1, found in Rhodospirillum rubrum (strain ATCC 11170 / ATH 1.1.1 / DSM 467 / LMG 4362 / NCIMB 8255 / S1).